Consider the following 253-residue polypeptide: Protein C1orf43 homolog (253 aa).

A helical transmembrane segment spans residues 11–31; the sequence is VNVVLVMAYGSLVFVLLFIFV. Residues 194-213 are disordered; it reads SGSSQRQHQSAAKDLTQSPE.

Its subcellular location is the membrane. It is found in the golgi apparatus. The protein localises to the mitochondrion. Its function is as follows. General regulator of phagocytosis. Required to uptake Gram negative bacterium by macrophages. The sequence is that of Protein C1orf43 homolog from Bos taurus (Bovine).